The primary structure comprises 273 residues: Translation initiation factor IF-3, mitochondrial (273 aa).

A mitochondrion-targeting transit peptide spans 1–32; the sequence is MAALFLKKLTLQTVKTENYCIRRCLGKYILQG. Residues 33 to 92 constitute a propeptide, removed in mature form; it reads PAPTQQPPRPSCLIHAKAFSTEDTQDEMTKKKKNETAFSSVGRKINERIIHVLDEQGNDL. A disordered region spans residues 242-273; the sequence is EEAAWKAAPDTPRRDALNGGDGKDGASGVLPQ. Positions 252-265 are enriched in basic and acidic residues; the sequence is TPRRDALNGGDGKD.

It belongs to the IF-3 family.

It localises to the mitochondrion. Its function is as follows. IF-3 binds to the 28S ribosomal subunit and shifts the equilibrium between 55S ribosomes and their 39S and 28S subunits in favor of the free subunits, thus enhancing the availability of 28S subunits on which protein synthesis initiation begins. The sequence is that of Translation initiation factor IF-3, mitochondrial (MTIF3) from Bos taurus (Bovine).